The following is a 659-amino-acid chain: 1,4-alpha-glucan branching enzyme GlgB (659 aa).

Basic and acidic residues predominate over residues 1–12 (MRNCKELKHEKN). The interval 1-25 (MRNCKELKHEKNGNVTEKIGKNKGK) is disordered. Residue aspartate 337 is the Nucleophile of the active site. Glutamate 390 functions as the Proton donor in the catalytic mechanism.

It belongs to the glycosyl hydrolase 13 family. GlgB subfamily. As to quaternary structure, monomer.

It catalyses the reaction Transfers a segment of a (1-&gt;4)-alpha-D-glucan chain to a primary hydroxy group in a similar glucan chain.. It functions in the pathway glycan biosynthesis; glycogen biosynthesis. Functionally, catalyzes the formation of the alpha-1,6-glucosidic linkages in glycogen by scission of a 1,4-alpha-linked oligosaccharide from growing alpha-1,4-glucan chains and the subsequent attachment of the oligosaccharide to the alpha-1,6 position. The chain is 1,4-alpha-glucan branching enzyme GlgB from Clostridium perfringens (strain ATCC 13124 / DSM 756 / JCM 1290 / NCIMB 6125 / NCTC 8237 / Type A).